Reading from the N-terminus, the 121-residue chain is Small ribosomal subunit protein uS11 (121 aa).

It belongs to the universal ribosomal protein uS11 family. As to quaternary structure, part of the 30S ribosomal subunit. Interacts with proteins S7 and S18. Binds to IF-3.

Functionally, located on the platform of the 30S subunit, it bridges several disparate RNA helices of the 16S rRNA. Forms part of the Shine-Dalgarno cleft in the 70S ribosome. This Mycoplasma genitalium (strain ATCC 33530 / DSM 19775 / NCTC 10195 / G37) (Mycoplasmoides genitalium) protein is Small ribosomal subunit protein uS11.